Here is a 233-residue protein sequence, read N- to C-terminus: Partner of Y14 and mago (233 aa).

The disordered stretch occupies residues Met1–Glu153. Positions Glu62–Ala97 form a coiled coil. Over residues Gln65–Asn90 the composition is skewed to basic and acidic residues. Residues Lys122 to Ala142 show a composition bias toward low complexity. The stretch at Ala167–Asp199 forms a coiled coil.

It belongs to the pym family. As to quaternary structure, interacts (via N-terminus) with mago and tsu/Y14; the interaction is direct.

The protein resides in the cytoplasm. It localises to the nucleus. Its function is as follows. Regulator of the exon junction complex (EJC), a multiprotein complex that associates immediately upstream of the exon-exon junction on mRNAs and serves as a positional landmarks for the intron exon structure of genes and directs post-transcriptional processes in the cytoplasm such as mRNA export, nonsense-mediated mRNA decay (NMD) or translation. This chain is Partner of Y14 and mago, found in Anopheles gambiae (African malaria mosquito).